The primary structure comprises 337 residues: Glyceraldehyde-3-phosphate dehydrogenase (337 aa).

Residues 17-18 (RI), D39, K83, and S125 each bind NAD(+). D-glyceraldehyde 3-phosphate is bound by residues 156–158 (SCT), T187, R202, 215–216 (TG), and R238. The active-site Nucleophile is the C157. NAD(+) is bound at residue N319.

It belongs to the glyceraldehyde-3-phosphate dehydrogenase family. Homotetramer.

It localises to the cytoplasm. The enzyme catalyses D-glyceraldehyde 3-phosphate + phosphate + NAD(+) = (2R)-3-phospho-glyceroyl phosphate + NADH + H(+). It functions in the pathway carbohydrate degradation; glycolysis; pyruvate from D-glyceraldehyde 3-phosphate: step 1/5. Catalyzes the oxidative phosphorylation of glyceraldehyde 3-phosphate (G3P) to 1,3-bisphosphoglycerate (BPG) using the cofactor NAD. The first reaction step involves the formation of a hemiacetal intermediate between G3P and a cysteine residue, and this hemiacetal intermediate is then oxidized to a thioester, with concomitant reduction of NAD to NADH. The reduced NADH is then exchanged with the second NAD, and the thioester is attacked by a nucleophilic inorganic phosphate to produce BPG. The protein is Glyceraldehyde-3-phosphate dehydrogenase (gapA) of Mycoplasma pneumoniae (strain ATCC 29342 / M129 / Subtype 1) (Mycoplasmoides pneumoniae).